The primary structure comprises 123 residues: Small ribosomal subunit protein uS12 (123 aa).

A 3-methylthioaspartic acid modification is found at aspartate 89.

This sequence belongs to the universal ribosomal protein uS12 family. In terms of assembly, part of the 30S ribosomal subunit. Contacts proteins S8 and S17. May interact with IF1 in the 30S initiation complex.

With S4 and S5 plays an important role in translational accuracy. Functionally, interacts with and stabilizes bases of the 16S rRNA that are involved in tRNA selection in the A site and with the mRNA backbone. Located at the interface of the 30S and 50S subunits, it traverses the body of the 30S subunit contacting proteins on the other side and probably holding the rRNA structure together. The combined cluster of proteins S8, S12 and S17 appears to hold together the shoulder and platform of the 30S subunit. The sequence is that of Small ribosomal subunit protein uS12 from Maridesulfovibrio salexigens (strain ATCC 14822 / DSM 2638 / NCIMB 8403 / VKM B-1763) (Desulfovibrio salexigens).